Here is a 374-residue protein sequence, read N- to C-terminus: MSKFKSLLLMFGTLILLSGCSNVEVFNAKGPVASSQKFLIIYSIIFMLVIVAVVLTMFAIFIFKYSYNKNSETGKMHHNSLIETIWFVVPIIIVIALSIPTVKTLYDYEKPPESKEDPMVVYAVSAGYKWFFAYPEQKVETVNTLTIPKNRPVVFKLQAMDTMTSFWIPQLGGQKYAMTGMTMNWTLQADETGTFRGRNSNFNGEGFSRQTFKVHSVDQSEFDSWVKDAKSKKTLSQDEFDKQLLPSTPNKELTFSGTHMAFVDPAADPEYIFYAYKRYNYVQKDPNFVAEKDLYKDVTDKPQKPARKVQITNANYKRHGMKPMILGNNDPYDNEFKKEEDHNSKEMEKISKSAKDENASKFGSKADNDHGGGH.

An N-terminal signal peptide occupies residues 1–19; that stretch reads MSKFKSLLLMFGTLILLSG. Residue cysteine 20 is the site of N-palmitoyl cysteine attachment. A lipid anchor (S-diacylglycerol cysteine) is attached at cysteine 20. 2 helical membrane passes run 43 to 63 and 82 to 102; these read SIIFMLVIVAVVLTMFAIFIF and IETIWFVVPIIIVIALSIPTV. The segment at 321-374 is disordered; the sequence is MKPMILGNNDPYDNEFKKEEDHNSKEMEKISKSAKDENASKFGSKADNDHGGGH. The span at 334 to 374 shows a compositional bias: basic and acidic residues; sequence NEFKKEEDHNSKEMEKISKSAKDENASKFGSKADNDHGGGH.

Belongs to the cytochrome c oxidase subunit 2 family.

It is found in the cell membrane. The enzyme catalyses 2 a quinol + O2 = 2 a quinone + 2 H2O. In terms of biological role, catalyzes quinol oxidation with the concomitant reduction of oxygen to water. Subunit II transfers the electrons from a quinol to the binuclear center of the catalytic subunit I. In Staphylococcus haemolyticus (strain JCSC1435), this protein is Probable quinol oxidase subunit 2 (qoxA).